The chain runs to 57 residues: UPF0509 protein YciZ (57 aa).

This sequence belongs to the UPF0509 family.

This is UPF0509 protein YciZ (yciZ) from Shigella flexneri.